A 352-amino-acid polypeptide reads, in one-letter code: Protein RecA (352 aa).

Residue 67 to 74 participates in ATP binding; it reads GPESSGKT.

Belongs to the RecA family.

It localises to the cytoplasm. In terms of biological role, can catalyze the hydrolysis of ATP in the presence of single-stranded DNA, the ATP-dependent uptake of single-stranded DNA by duplex DNA, and the ATP-dependent hybridization of homologous single-stranded DNAs. It interacts with LexA causing its activation and leading to its autocatalytic cleavage. In Chlamydia trachomatis serovar L2 (strain ATCC VR-902B / DSM 19102 / 434/Bu), this protein is Protein RecA.